We begin with the raw amino-acid sequence, 347 residues long: 3-methyl-2-oxobutanoate hydroxymethyltransferase 1, mitochondrial (347 aa).

A mitochondrion-targeting transit peptide spans 1-48; it reads MASSLTRNCSRFSKAISVRFMSNLPENTVYGGPKPQNPNQRVTLTHLR. Mg(2+)-binding residues include Asp-83 and Asp-122. 3-methyl-2-oxobutanoate is bound by residues 83–84, Asp-122, and Lys-152; that span reads DS. A Mg(2+)-binding site is contributed by Glu-154. Glu-222 functions as the Proton acceptor in the catalytic mechanism.

The protein belongs to the PanB family. Mg(2+) serves as cofactor.

The protein localises to the mitochondrion. It catalyses the reaction 3-methyl-2-oxobutanoate + (6R)-5,10-methylene-5,6,7,8-tetrahydrofolate + H2O = 2-dehydropantoate + (6S)-5,6,7,8-tetrahydrofolate. The protein operates within cofactor biosynthesis; (R)-pantothenate biosynthesis; (R)-pantoate from 3-methyl-2-oxobutanoate: step 1/2. Functionally, catalyzes the reversible reaction in which hydroxymethyl group from 5,10-methylenetetrahydrofolate is transferred onto alpha-ketoisovalerate to form ketopantoate. This chain is 3-methyl-2-oxobutanoate hydroxymethyltransferase 1, mitochondrial (KPHMT1), found in Arabidopsis thaliana (Mouse-ear cress).